The chain runs to 261 residues: MANLSSDFQTFTMDDPIRQLAELSNTLHHFQTFPPPFSSSLDSLFFHNQFPDHFPGKSLENNFHQGIFFPSNIQNNEESSSQFDTKKRKSLMEAVSTSENSVSDQTLSTSSAQVSINGNISTKNNSSRRGKRSKNREEEKEREVVHVRARRGQATDSHSIAERVRRGKINERLKCLQDIVPGCYKTMGMATMLDEIINYVQSLQNQVEFLSMKLTAASSYYDFNSETDAVESMQKAKAREAVEMGQGRDGSSVFHSSSWTL.

Low complexity predominate over residues Asn-72 to Gln-82. 2 disordered regions span residues Asn-72–His-158 and Val-242–Leu-261. A compositionally biased stretch (polar residues) spans Val-95 to Lys-123. The segment covering Asn-135–His-146 has biased composition (basic and acidic residues). One can recognise a bHLH domain in the interval Gln-153–Leu-203.

Homodimer. As to expression, expressed in stems.

Its subcellular location is the nucleus. In terms of biological role, positive regulator of brassinosteroid signaling. This is Transcription factor BEE 3 (BEE3) from Arabidopsis thaliana (Mouse-ear cress).